A 550-amino-acid chain; its full sequence is MTKYVFVTGGVVSSLGKGIAAASLAAILESRGLKVTLLKLDPYINVDPGTMSPFQHGEVFVTEDGAETDLDLGHYERFISTKMRKANNFTTGQIYESVIRKERRGDYLGKTVQVIPHITNEIQAFIERGAASATCGEPDVAIVEIGGTVGDIESLPFLEAARQMSLRLGRNSACFVHLTLVPYVATAGELKTKPTQHSVQKLREIGILPHVLLCRADRRIPDDESKKISMFSNVPEDAVISVWDADSIYKIPQMLHDQGLDRIICEELKLSPKDADLTMWSELVEKLENPKHEVTIGMVGKYVDLTESYKSLIEALRHASLHTSTKVNIEYIDSEEIETNGVDSLKHLDAVLVPGGFGRRGTEGKIAAIRYAREAKVPYLGICLGMQLAVIEFARNVVGLKQANSTEFEPDTPERVVALITEWYDRDGKVETRTEESDLGGTMRLGSQRCPIKPGTMAEEIYGKDVNERHRHRYEVNNRFVPQLEAGGLIISARTPSEDLPEMMELPRSMHPWFVGVQFHPEFTSTPRDGHPLFKSFVEAALANKQARGV.

Residues 1–270 are amidoligase domain; it reads MTKYVFVTGG…DRIICEELKL (270 aa). A CTP-binding site is contributed by Ser-13. Residue Ser-13 coordinates UTP. ATP is bound by residues 14–19 and Asp-71; that span reads SLGKGI. Asp-71 and Glu-144 together coordinate Mg(2+). CTP-binding positions include 151 to 153, 191 to 196, and Lys-227; these read DIE and KTKPTQ. Residues 191–196 and Lys-227 each bind UTP; that span reads KTKPTQ. In terms of domain architecture, Glutamine amidotransferase type-1 spans 295–547; the sequence is TIGMVGKYVD…VEAALANKQA (253 aa). Gly-356 serves as a coordination point for L-glutamine. The Nucleophile; for glutamine hydrolysis role is filled by Cys-383. L-glutamine is bound by residues 384–387, Glu-407, and Arg-473; that span reads LGMQ. Active-site residues include His-520 and Glu-522.

Belongs to the CTP synthase family. As to quaternary structure, homotetramer.

The catalysed reaction is UTP + L-glutamine + ATP + H2O = CTP + L-glutamate + ADP + phosphate + 2 H(+). The enzyme catalyses L-glutamine + H2O = L-glutamate + NH4(+). It catalyses the reaction UTP + NH4(+) + ATP = CTP + ADP + phosphate + 2 H(+). Its pathway is pyrimidine metabolism; CTP biosynthesis via de novo pathway; CTP from UDP: step 2/2. Its activity is regulated as follows. Allosterically activated by GTP, when glutamine is the substrate; GTP has no effect on the reaction when ammonia is the substrate. The allosteric effector GTP functions by stabilizing the protein conformation that binds the tetrahedral intermediate(s) formed during glutamine hydrolysis. Inhibited by the product CTP, via allosteric rather than competitive inhibition. In terms of biological role, catalyzes the ATP-dependent amination of UTP to CTP with either L-glutamine or ammonia as the source of nitrogen. Regulates intracellular CTP levels through interactions with the four ribonucleotide triphosphates. The polypeptide is CTP synthase (Burkholderia lata (strain ATCC 17760 / DSM 23089 / LMG 22485 / NCIMB 9086 / R18194 / 383)).